Consider the following 273-residue polypeptide: 4-hydroxy-tetrahydrodipicolinate reductase (273 aa).

NAD(+)-binding positions include Gly-12–Met-17 and Glu-38. Arg-39 is a binding site for NADP(+). NAD(+)-binding positions include Gly-102–Thr-104 and Ala-126–Phe-129. His-159 acts as the Proton donor/acceptor in catalysis. His-160 contacts (S)-2,3,4,5-tetrahydrodipicolinate. Catalysis depends on Lys-163, which acts as the Proton donor. Residue Gly-169–Thr-170 coordinates (S)-2,3,4,5-tetrahydrodipicolinate.

This sequence belongs to the DapB family. As to quaternary structure, homotetramer.

The protein localises to the cytoplasm. It carries out the reaction (S)-2,3,4,5-tetrahydrodipicolinate + NAD(+) + H2O = (2S,4S)-4-hydroxy-2,3,4,5-tetrahydrodipicolinate + NADH + H(+). The enzyme catalyses (S)-2,3,4,5-tetrahydrodipicolinate + NADP(+) + H2O = (2S,4S)-4-hydroxy-2,3,4,5-tetrahydrodipicolinate + NADPH + H(+). It participates in amino-acid biosynthesis; L-lysine biosynthesis via DAP pathway; (S)-tetrahydrodipicolinate from L-aspartate: step 4/4. Its function is as follows. Catalyzes the conversion of 4-hydroxy-tetrahydrodipicolinate (HTPA) to tetrahydrodipicolinate. The polypeptide is 4-hydroxy-tetrahydrodipicolinate reductase (Proteus mirabilis (strain HI4320)).